We begin with the raw amino-acid sequence, 400 residues long: MLKVEMLSTGDEVLYGQIVDTNAAWLADFFFHQGLPLSRRNTVGDNLDDLVTILRERSQHADVLIVNGGLGPTSDDLSALAAATAKGEGLVLHEAWLKEMERYFHERGRVMAPSNRKQAELPASAEFINNPVGTACGFAVQLNRCLMFFTPGVPSEFKVMVEHEILPRLRERFSLPQPPVCLRLTTFGRSESDLAQSLDTLQLPPGVTMGYRSSMPIIELKLTGPASEQQAMEKLWLDVKRVAGQSVIFEGTEGLPAQISRELQNRQFSLTLSEQFTGGLLALQLSRAGAPLLACEVIPSQEETLAQTAHWITERRANHFAGLALAVSGFENEHLNFALATPDGTFALRVRFSTTRYSLAIRQEVCAMMALNMLRRWLNGQDIASEHGWIEVVESMTLSV.

Belongs to the CinA family.

This is CinA-like protein from Shigella flexneri.